A 72-amino-acid chain; its full sequence is Translation initiation factor IF-1 2 (72 aa).

The S1-like domain maps to Met1 to Lys72.

The protein belongs to the IF-1 family. Component of the 30S ribosomal translation pre-initiation complex which assembles on the 30S ribosome in the order IF-2 and IF-3, IF-1 and N-formylmethionyl-tRNA(fMet); mRNA recruitment can occur at any time during PIC assembly.

It localises to the cytoplasm. One of the essential components for the initiation of protein synthesis. Stabilizes the binding of IF-2 and IF-3 on the 30S subunit to which N-formylmethionyl-tRNA(fMet) subsequently binds. Helps modulate mRNA selection, yielding the 30S pre-initiation complex (PIC). Upon addition of the 50S ribosomal subunit IF-1, IF-2 and IF-3 are released leaving the mature 70S translation initiation complex. In Azoarcus sp. (strain BH72), this protein is Translation initiation factor IF-1 2.